A 148-amino-acid chain; its full sequence is U5-hexatoxin-Hi1a (148 aa).

A signal peptide spans M1–G21. Residues Q22 to R38 constitute a propeptide that is removed on maturation. Positions T125–P148 are disordered.

Post-translationally, contains 2 disulfide bonds. Expressed by the venom gland.

It is found in the secreted. Probable ion channel inhibitor. In Hadronyche infensa (Fraser island funnel-web spider), this protein is U5-hexatoxin-Hi1a.